The following is a 375-amino-acid chain: Tyrosine--tRNA ligase (375 aa).

Positions 37, 168, 172, 175, and 190 each coordinate L-tyrosine. The short motif at 251–255 (KMSKS) is the 'KMSKS' region element. Lysine 254 lines the ATP pocket.

The protein belongs to the class-I aminoacyl-tRNA synthetase family. TyrS type 4 subfamily. Homodimer.

It is found in the cytoplasm. It catalyses the reaction tRNA(Tyr) + L-tyrosine + ATP = L-tyrosyl-tRNA(Tyr) + AMP + diphosphate + H(+). Catalyzes the attachment of tyrosine to tRNA(Tyr) in a two-step reaction: tyrosine is first activated by ATP to form Tyr-AMP and then transferred to the acceptor end of tRNA(Tyr). The sequence is that of Tyrosine--tRNA ligase from Thermococcus kodakarensis (strain ATCC BAA-918 / JCM 12380 / KOD1) (Pyrococcus kodakaraensis (strain KOD1)).